The following is a 504-amino-acid chain: Pyruvate kinase (504 aa).

Substrate is bound at residue Arg-53. K(+)-binding residues include Asn-55, Ser-57, Asp-88, and Thr-89. 55–58 (NFSH) contacts ATP. ATP-binding residues include Arg-95 and Lys-181. Glu-246 provides a ligand contact to Mg(2+). The substrate site is built by Gly-269, Asp-270, and Thr-302. Asp-270 lines the Mg(2+) pocket.

Belongs to the pyruvate kinase family. Homotetramer. The cofactor is Mg(2+). Requires K(+) as cofactor.

Its subcellular location is the cytoplasm. It catalyses the reaction pyruvate + ATP = phosphoenolpyruvate + ADP + H(+). It participates in carbohydrate degradation; glycolysis; pyruvate from D-glyceraldehyde 3-phosphate: step 5/5. This Candida albicans (strain SC5314 / ATCC MYA-2876) (Yeast) protein is Pyruvate kinase (CDC19).